The following is a 224-amino-acid chain: Ion-translocating oxidoreductase complex subunit E (224 aa).

5 helical membrane-spanning segments follow: residues 51–71, 81–101, 105–125, 140–160, and 194–214; these read LGLG…VSLF, IPIY…LMNA, SLYQ…IVIG, MFDG…LGAI, and HFLL…ILAI.

It belongs to the NqrDE/RnfAE family. As to quaternary structure, the complex is composed of six subunits: RnfA, RnfB, RnfC, RnfD, RnfE and RnfG.

The protein localises to the cell inner membrane. Part of a membrane-bound complex that couples electron transfer with translocation of ions across the membrane. The sequence is that of Ion-translocating oxidoreductase complex subunit E from Pasteurella multocida (strain Pm70).